The sequence spans 185 residues: Elongation factor P (185 aa).

It belongs to the elongation factor P family.

The protein resides in the cytoplasm. The protein operates within protein biosynthesis; polypeptide chain elongation. Its function is as follows. Involved in peptide bond synthesis. Stimulates efficient translation and peptide-bond synthesis on native or reconstituted 70S ribosomes in vitro. Probably functions indirectly by altering the affinity of the ribosome for aminoacyl-tRNA, thus increasing their reactivity as acceptors for peptidyl transferase. This is Elongation factor P from Deinococcus geothermalis (strain DSM 11300 / CIP 105573 / AG-3a).